Here is a 447-residue protein sequence, read N- to C-terminus: Probable tRNA methyltransferase 9B (447 aa).

Serine 212 bears the Phosphoserine mark. 2 disordered regions span residues 274 to 306 (AWAN…PNLD) and 320 to 348 (WLRT…NFLD). A compositionally biased stretch (polar residues) spans 276–286 (ANSTVSQQPSR).

Belongs to the methyltransferase superfamily.

In terms of biological role, may modify wobble uridines in specific arginine and glutamic acid tRNAs. Acts as a tumor suppressor by promoting the expression of LIN9. The chain is Probable tRNA methyltransferase 9B (Trmt9b) from Mus musculus (Mouse).